The chain runs to 784 residues: uncharacterized protein (784 aa).

One can recognise a 3'-5' exonuclease domain in the interval 422-619 (IRIVQNEQDL…EVFQKIVEVV (198 aa)).

This is an uncharacterized protein from Caenorhabditis elegans.